We begin with the raw amino-acid sequence, 218 residues long: Thiamine-phosphate synthase (218 aa).

4-amino-2-methyl-5-(diphosphooxymethyl)pyrimidine contacts are provided by residues 43–47 (QLRDK) and N75. Residues D76 and D95 each contribute to the Mg(2+) site. S114 lines the 4-amino-2-methyl-5-(diphosphooxymethyl)pyrimidine pocket. 141 to 143 (TPT) provides a ligand contact to 2-[(2R,5Z)-2-carboxy-4-methylthiazol-5(2H)-ylidene]ethyl phosphate. Residue K144 participates in 4-amino-2-methyl-5-(diphosphooxymethyl)pyrimidine binding. G172 serves as a coordination point for 2-[(2R,5Z)-2-carboxy-4-methylthiazol-5(2H)-ylidene]ethyl phosphate.

It belongs to the thiamine-phosphate synthase family. Requires Mg(2+) as cofactor.

The enzyme catalyses 2-[(2R,5Z)-2-carboxy-4-methylthiazol-5(2H)-ylidene]ethyl phosphate + 4-amino-2-methyl-5-(diphosphooxymethyl)pyrimidine + 2 H(+) = thiamine phosphate + CO2 + diphosphate. It carries out the reaction 2-(2-carboxy-4-methylthiazol-5-yl)ethyl phosphate + 4-amino-2-methyl-5-(diphosphooxymethyl)pyrimidine + 2 H(+) = thiamine phosphate + CO2 + diphosphate. The catalysed reaction is 4-methyl-5-(2-phosphooxyethyl)-thiazole + 4-amino-2-methyl-5-(diphosphooxymethyl)pyrimidine + H(+) = thiamine phosphate + diphosphate. Its pathway is cofactor biosynthesis; thiamine diphosphate biosynthesis; thiamine phosphate from 4-amino-2-methyl-5-diphosphomethylpyrimidine and 4-methyl-5-(2-phosphoethyl)-thiazole: step 1/1. Condenses 4-methyl-5-(beta-hydroxyethyl)thiazole monophosphate (THZ-P) and 2-methyl-4-amino-5-hydroxymethyl pyrimidine pyrophosphate (HMP-PP) to form thiamine monophosphate (TMP). In Thermobifida fusca (strain YX), this protein is Thiamine-phosphate synthase.